A 397-amino-acid polypeptide reads, in one-letter code: Elongation factor Tu (397 aa).

A tr-type G domain is found at 10 to 206 (KPHVNIGTIG…ACDDYIPEPV (197 aa)). Residues 19–26 (GHIDHGKT) form a G1 region. Residue 19 to 26 (GHIDHGKT) coordinates GTP. Threonine 26 is a Mg(2+) binding site. Residues 62 to 66 (GITIS) are G2. Residues 83–86 (DCPG) form a G3 region. Residues 83–87 (DCPGH) and 138–141 (NKAD) each bind GTP. The G4 stretch occupies residues 138 to 141 (NKAD). Residues 176–178 (SAL) form a G5 region.

This sequence belongs to the TRAFAC class translation factor GTPase superfamily. Classic translation factor GTPase family. EF-Tu/EF-1A subfamily. Monomer.

Its subcellular location is the cytoplasm. The catalysed reaction is GTP + H2O = GDP + phosphate + H(+). In terms of biological role, GTP hydrolase that promotes the GTP-dependent binding of aminoacyl-tRNA to the A-site of ribosomes during protein biosynthesis. The chain is Elongation factor Tu from Acidothermus cellulolyticus (strain ATCC 43068 / DSM 8971 / 11B).